The chain runs to 46 residues: Protein PsbN (46 aa).

The chain crosses the membrane as a helical span at residues 5–27 (TLVTLFVSGLLMSFTGYALYTAF).

Belongs to the PsbN family.

It localises to the plastid membrane. Functionally, may play a role in photosystem I and II biogenesis. The protein is Protein PsbN of Cuscuta obtusiflora (Peruvian dodder).